The following is a 508-amino-acid chain: Tyrosine decarboxylase 4 (508 aa).

K318 is modified (N6-(pyridoxal phosphate)lysine).

This sequence belongs to the group II decarboxylase family. Homodimer. Pyridoxal 5'-phosphate serves as cofactor.

The catalysed reaction is L-tyrosine + H(+) = tyramine + CO2. The protein is Tyrosine decarboxylase 4 (TYRDC-4) of Petroselinum crispum (Parsley).